Reading from the N-terminus, the 366-residue chain is Growth hormone secretagogue receptor type 1 (366 aa).

Residues methionine 1–threonine 40 lie on the Extracellular side of the membrane. N-linked (GlcNAc...) asparagine glycosylation is found at asparagine 13 and asparagine 27. A helical transmembrane segment spans residues proline 41–leucine 66. Topologically, residues valine 67–arginine 72 are cytoplasmic. Residues glutamate 73–methionine 96 form a helical membrane-spanning segment. Over proline 97–lysine 117 the chain is Extracellular. A disulfide bond links cysteine 116 and cysteine 198. The helical transmembrane segment at leucine 118–valine 139 threads the bilayer. Over glutamate 140–leucine 162 the chain is Cytoplasmic. A helical membrane pass occupies residues valine 163–glycine 183. The Extracellular segment spans residues valine 184–threonine 211. Residues valine 212–isoleucine 235 form a helical membrane-spanning segment. At glycine 236–lysine 263 the chain is on the cytoplasmic side. A helical membrane pass occupies residues methionine 264–leucine 285. The Extracellular segment spans residues phenylalanine 286–glutamine 302. The helical transmembrane segment at tyrosine 303 to methionine 326 threads the bilayer. Over serine 327–threonine 366 the chain is Cytoplasmic.

It belongs to the G-protein coupled receptor 1 family. In terms of tissue distribution, pituitary and hypothalamus.

It localises to the cell membrane. Receptor for ghrelin, coupled to G-alpha-11 proteins. Stimulates growth hormone secretion. Also binds other growth hormone releasing peptides (GHRP) (e.g. Met-enkephalin and GHRP-6) as well as non-peptide, low molecular weight secretagogues (e.g. L-692,429, MK-0677, adenosine). The polypeptide is Growth hormone secretagogue receptor type 1 (GHSR) (Sus scrofa (Pig)).